The chain runs to 190 residues: Protein GrpE (190 aa).

Polar residues predominate over residues methionine 1–proline 11. Positions methionine 1 to alanine 36 are disordered. Acidic residues predominate over residues glutamate 13 to serine 28.

This sequence belongs to the GrpE family. In terms of assembly, homodimer.

The protein resides in the cytoplasm. Functionally, participates actively in the response to hyperosmotic and heat shock by preventing the aggregation of stress-denatured proteins, in association with DnaK and GrpE. It is the nucleotide exchange factor for DnaK and may function as a thermosensor. Unfolded proteins bind initially to DnaJ; upon interaction with the DnaJ-bound protein, DnaK hydrolyzes its bound ATP, resulting in the formation of a stable complex. GrpE releases ADP from DnaK; ATP binding to DnaK triggers the release of the substrate protein, thus completing the reaction cycle. Several rounds of ATP-dependent interactions between DnaJ, DnaK and GrpE are required for fully efficient folding. The protein is Protein GrpE of Teredinibacter turnerae (strain ATCC 39867 / T7901).